A 446-amino-acid chain; its full sequence is Glutamate-1-semialdehyde 2,1-aminomutase (446 aa).

An N6-(pyridoxal phosphate)lysine modification is found at K263.

This sequence belongs to the class-III pyridoxal-phosphate-dependent aminotransferase family. HemL subfamily. Pyridoxal 5'-phosphate is required as a cofactor.

It is found in the cytoplasm. The catalysed reaction is (S)-4-amino-5-oxopentanoate = 5-aminolevulinate. It functions in the pathway porphyrin-containing compound metabolism; protoporphyrin-IX biosynthesis; 5-aminolevulinate from L-glutamyl-tRNA(Glu): step 2/2. This chain is Glutamate-1-semialdehyde 2,1-aminomutase, found in Haloquadratum walsbyi (strain DSM 16790 / HBSQ001).